The following is a 67-amino-acid chain: Sperm protamine P1 (67 aa).

The disordered stretch occupies residues 1 to 67 (MASYRNSRSR…RRRKRNNENK (67 aa)). Composition is skewed to basic residues over residues 7 to 25 (SRSRSRSRFRRRRGRRSRV) and 34 to 67 (RSSRRRRRGKGRAHSGKKGRRSGSRRRKRNNENK).

Belongs to the protamine P1 family. As to expression, testis.

It localises to the nucleus. Its subcellular location is the chromosome. Protamines substitute for histones in the chromatin of sperm during the haploid phase of spermatogenesis. They compact sperm DNA into a highly condensed, stable and inactive complex. This Isoodon macrourus (Short-nosed bandicoot) protein is Sperm protamine P1 (PRM1).